Here is an 875-residue protein sequence, read N- to C-terminus: Metal transporter CNNM2 (875 aa).

Topologically, residues 1–250 (MIGCGACEPE…TKMIVGEEKK (250 aa)) are extracellular. A glycan (N-linked (GlcNAc...) asparagine) is linked at asparagine 112. The disordered stretch occupies residues 121-149 (TEHERRRHTPSERGLGGPAPPEPDSGPQR). A helical membrane pass occupies residues 251 to 271 (FLLPFWLQVIFISLLLCLSGM). Residues 251–431 (FLLPFWLQVI…DPYNDLVKEE (181 aa)) form the CNNM transmembrane domain. The Cytoplasmic portion of the chain corresponds to 272–313 (FSGLNLGLMALDPMELRIVQNCGTEKEKNYAKRIEPVRRQGN). An intramembrane region (helical) is located at residues 314–334 (YLLCSLLLGNVLVNTTLTILL). The Cytoplasmic portion of the chain corresponds to 335–338 (DDIA). Residues 339–359 (GSGLVAVVVSTIGIVIFGEIV) form a helical membrane-spanning segment. The Extracellular portion of the chain corresponds to 360-368 (PQAICSRHG). Residues 369 to 389 (LAVGANTIFLTKFFMMMTFPA) form a helical membrane-spanning segment. The Cytoplasmic segment spans residues 390 to 875 (SYPVSKLLDC…NHSLHSEGAI (486 aa)). 2 CBS domains span residues 450–511 (MTPL…CTPL) and 518–584 (YNHP…ILDE). Residues 741–763 (AGSPGENKSPPRPCGLNHSDSLS) form a disordered region. Serine 761 carries the post-translational modification Phosphoserine.

The protein belongs to the ACDP family. Isoform 1 and isoform 2 may interact with each other. Post-translationally, the N-terminus is cleaved within the endoplasmic reticulum. The signal peptidase complex seems to be involved in the processing, but the exact cleavage site has not been identified. Widely expressed, with highest levels in kidney, lung, spleen and testis. In the kidney, predominantly expressed in the distal convoluted tubule and, at lower levels, in the connecting tubule (at protein level).

The protein localises to the cell membrane. Divalent metal cation transporter. Mediates transport of divalent metal cations in an order of Mg(2+) &gt; Co(2+) &gt; Mn(2+) &gt; Sr(2+) &gt; Ba(2+) &gt; Cu(2+) &gt; Fe(2+). The sequence is that of Metal transporter CNNM2 (Cnnm2) from Mus musculus (Mouse).